The primary structure comprises 508 residues: Cell death protein 3 (508 aa).

Residues 1–223 (MMRQDRRNLL…FHEEDMNYVD (223 aa)) constitute a propeptide that is removed on maturation. The 90-residue stretch at 2 to 91 (MRQDRRNLLE…HELAAVLEPL (90 aa)) folds into the CARD domain. 2 disordered regions span residues 106–130 (PMSP…TRVH) and 148–184 (YTRA…SSAN). Over residues 118–127 (LSPSTFSSPT) the composition is skewed to polar residues. Residues 171–184 (SPSNSFQSQPSSAN) are compositionally biased toward low complexity. Catalysis depends on residues His317 and Cys360. The tract at residues 392-407 (GPLFNFLGCVRPQAQQ) is required for interaction with ced-4.

This sequence belongs to the peptidase C14A family. In terms of assembly, the active form is probably a heterodimer of the p17 subunit with either the p15 or p13 subunit which are all derived from the precursor by autocatalysis. Interacts with octameric ced-4 (two ced-3 zymogens per one ced-4 octamer); the interaction causes the autoproteolytic cleavage and activation of ced-3. Processed ced-3 also interacts with ced-4 octamer to form a stable holoenzyme. Interacts (via large subunit p17) with csp-3; the interaction prevents ced-3 autoactivation and delays ced-4-induced ced-3 processing. Interacts (via large subunit p17 or small subunit p13 or p15) with csp-2; the interaction inhibits ced-3 autoactivation. Interacts (via propeptide) with nucleoporin npp-14; the interaction tethers ced-3 to the nuclear membrane and prevents its autoprocessing in absence of ced-4. Interacts with dct-1. May form a complex composed of ced-3, ced-4 and mac-1. Post-translationally, autocatalytic cleavage removes the propeptide and generates the catalytic subunit p17 and two non-catalytic subunits p15 and p13; autoproteolysis is induced by ced-4 oligomer. Cleaved by caspase csp-1 probably at Asp-146 and Asp-376.

Its subcellular location is the nucleus membrane. It is found in the perikaryon. The protein localises to the synapse. The protein resides in the mitochondrion. It localises to the cytoplasm. Its subcellular location is the perinuclear region. The enzyme catalyses Strict requirement for an Asp residue at position P1 and has a preferred cleavage sequence of Asp-Glu-Val-Asp-|-.. Its activity is regulated as follows. Octameric ced-4 activates zymogen autoprocessing and enhances activity of processed ced-3. Zymogen autoactivation is inhibited by csp-3. csp-3 has no effect on active ced-3. Zymogen autoactivation is inhibited by csp-2. Inhibited by cysteine protease inhibitor iodoacetic acid (CH3COOI). Inhibited by benzyloxycarbonyl-DEVD-fluoro-methyl ketone (zDEVD-fmk). Inhibited by benzyloxycarbonyl-VAD-fluoro-methyl ketone (zVAD-fmk). Not inhibited by N-[N-(L-3-transcarboxirane-2-carbonyl)-leucyl]-agmatine (E-64) or by the serine and cysteine protease inhibitor L-1-chloro-3-[4-to-osylamido]-7-amino-2-heptanone (TLCK). Acts as a cysteine protease in controlling programmed cell death (apoptosis) by proteolytically activating or inactivating a wide range of substrates. Component of the egl-1, ced-9, ced-4 and ced-3 apoptotic signaling cascade required for the initiation of programmed cell death in cells fated to die during embryonic and postembryonic development. During oogenesis, required for germline apoptosis downstream of ced-9 and ced-4 but independently of egl-1. By cleaving and activating ced-8, promotes phosphatidylserine exposure on the surface of apoptotic cells; phosphatidylserine is a specific marker only present at the surface of apoptotic cells and acts as a specific signal for engulfment. By cleaving and converting dcr-1 into a deoxyribonuclease (DNase), promotes apoptotic chromosomal DNA fragmentation. By cleaving mitochondrial fission protein drp-1, may regulate the removal of mitochondria during apoptosis. During germline apoptosis, cleaves translation initiation factor ifg-1 (isoform p170) promoting cap-independent translation. During male tail morphogenesis, promotes apoptosis of the tail-spike cell downstream of ced-4 but independently of egl-1 and ced-9. By cleaving cnt-1, prevents the activation of the prosurvival akt-1/2 signaling pathway and thus promotes apoptosis. Downstream of ced-4, may play a role in sex-specific cell apoptosis by cleaving sex-determining protein fem-1. May regulate germline apoptosis in response to DNA damage, probably downstream of let-60/ras and mpk-1 pathway. Cleaves ced-9 in vitro. Cleaves csp-2 isoform b resulting in the removal of the propeptide and the generation of csp-2 subunit p31 in vitro. Independently of its apoptotic role has additional functions. Probably by cleaving and thereby activating actin-severing protein gsnl-1, required for the elimination of transient presynaptic components during larval development downstream of egl-1, ced-9 and ced-4 pathway. Together with ain-1, a component of the miRNA-induced-silencing complex (miRISC), regulates temporal cell fate patterning during larval development. Acts in cell fate patterning by cleaving heterochronic protein lin-28, likely promoting its degradation. Also cleaves heterochronic protein lin-14 and exonuclease disl-2 in vitro. Downstream of calreticulin crt-1 and ced-4 and independently of egl-1 and ced-9, plays a role in the initial steps of axonal regrowth following axotomy. Cleaves 14-3-3-like protein ftt-2, tubulin tbb-2 and calreticulin crt-1 in vitro. Plays also a role in resistance to S.typhimurium-mediated infection. The sequence is that of Cell death protein 3 from Caenorhabditis remanei (Caenorhabditis vulgaris).